The sequence spans 469 residues: Serine/threonine-protein kinase orb6 (469 aa).

One can recognise a Protein kinase domain in the interval 93–392; sequence FSTIKVIGKG…AIEIMQHPFF (300 aa). Residues 99–107 and Lys-122 each bind ATP; that span reads IGKGAFGEV. Asp-216 functions as the Proton acceptor in the catalytic mechanism. The AGC-kinase C-terminal domain occupies 393–467; it reads TGIDWDHIRE…KKFNYLTMKG (75 aa).

The protein belongs to the protein kinase superfamily. Ser/Thr protein kinase family. In terms of assembly, interacts with mob2.

The enzyme catalyses L-seryl-[protein] + ATP = O-phospho-L-seryl-[protein] + ADP + H(+). The catalysed reaction is L-threonyl-[protein] + ATP = O-phospho-L-threonyl-[protein] + ADP + H(+). Functionally, interacts with pak1/shk1 and coordinates cell morphogenesis with the cell cycle. It is essential for maintenance of cell polarity and is involved in mitotic control. This is Serine/threonine-protein kinase orb6 (orb6) from Schizosaccharomyces pombe (strain 972 / ATCC 24843) (Fission yeast).